A 162-amino-acid polypeptide reads, in one-letter code: UPF0114 protein SO_3997 (162 aa).

The next 3 membrane-spanning stretches (helical) occupy residues 10–32 (YASR…GLGI), 53–75 (LVLV…MVMF), and 136–156 (IMWY…MGYL).

Belongs to the UPF0114 family.

The protein resides in the cell membrane. The chain is UPF0114 protein SO_3997 from Shewanella oneidensis (strain ATCC 700550 / JCM 31522 / CIP 106686 / LMG 19005 / NCIMB 14063 / MR-1).